We begin with the raw amino-acid sequence, 733 residues long: Protein PAT1 homolog 2 (733 aa).

2 disordered regions span residues 42 to 75 and 337 to 366; these read LDQESDEEPVKLEDDHTKPIQMPEAPKEEEPEAL and LHPQHRRILSQRQRPQSSSRRQWESRPDPY. Residues 49 to 59 show a composition bias toward basic and acidic residues; the sequence is EPVKLEDDHTK. Over residues 346 to 356 the composition is skewed to low complexity; it reads SQRQRPQSSSR.

Belongs to the PAT1 family. Interacts with ribonucleoprotein complex components. Interacts with cpeb. In terms of tissue distribution, oocyte-specific protein. Expressed throughout oogenesis but is not detectable in eggs, embryos, nor in adult tissues (at protein level).

It localises to the cytoplasm. The protein localises to the nucleus. Its function is as follows. RNA-binding protein that acts as a translational repressor. When overexpressed, able to disperse P-bodies. In Xenopus laevis (African clawed frog), this protein is Protein PAT1 homolog 2 (patl2).